The chain runs to 141 residues: Light-regulated protein 1, chloroplastic (141 aa).

Residues 1-41 (MQGALFIKPTILLPLPSSVSSPKLTFLLPHATKASRLSSLR) constitute a chloroplast transit peptide. Low complexity predominate over residues 35–51 (SRLSSLRSNNSSSSSSL). The segment at 35 to 58 (SRLSSLRSNNSSSSSSLTSDPNTV) is disordered. Positions 58-132 (VDYNSSILSV…ACDDLGGEFC (75 aa)) are 2 X 15 AA approximate repeats. Tandem repeats lie at residues 67-81 (VFPA…GYAC) and 118-132 (VFRE…GEFC).

In terms of assembly, component of high molecular weight thylakoid LFNRs-containing protein complexes containing LIR1, LFNR1, LFNR2, TIC62 and TROL proteins. Interacts directly with LFNR1 and LFNR2; LIR1 increases the affinity of LFNR1 and LFNR2 for TIC62 and subsequent thylakoid relocalization. In terms of processing, may form interchain disulfide bonds with LFNR1 and LFNR2.

The protein localises to the plastid. It localises to the chloroplast thylakoid membrane. It is found in the chloroplast envelope. The protein resides in the chloroplast stroma. In terms of biological role, thylakoid-determinant subunit of high molecular weight LFNRs-containing protein complexes. In Arabidopsis thaliana (Mouse-ear cress), this protein is Light-regulated protein 1, chloroplastic.